The sequence spans 253 residues: MARLSFVSLLSLSLLFGQQAVRAQDYPTAVTLDCKEAMNKLRKAAGLPAFEDAVGDTFVLPAYSHEESRAAPVAETLWKTEICPKVLGGGRSRNVTEAVKLTGNFAYYPVTDGKKECSDAVEYWKGGLSQFNDTIPPTFQALNDPVVYNDRAVSFVALYNPKTSPVVSCVLLQCPNAGVGGRRLAAGTTDAVICLTNPAPLEARSQPFDDEQWKKIVDSLSLSEEEEEKGGVSPVVPSVALISAAVISAFALF.

A signal peptide spans 1–23 (MARLSFVSLLSLSLLFGQQAVRA). A propeptide spans 182 to 184 (RRL) (removed in mature form).

As to quaternary structure, the TA4 antigen is composed of a 17 kDa and a 8 kDa chain, linked by a disulfide bond.

In Eimeria tenella (Coccidian parasite), this protein is Sporulated oocyst TA4 antigen.